A 142-amino-acid polypeptide reads, in one-letter code: uncharacterized protein (142 aa).

The N-acetyltransferase domain occupies 2 to 142 (IHMKQLTSKE…IESYLFRKPV (141 aa)).

Belongs to the acetyltransferase family.

This is an uncharacterized protein from Bacillus subtilis (strain 168).